We begin with the raw amino-acid sequence, 375 residues long: Myb family transcription factor PHL5 (375 aa).

Positions 159–171 (TSSQHQPKQSHPR) are enriched in polar residues. Positions 159 to 178 (TSSQHQPKQSHPRFSSPPSF) are disordered. Positions 189 to 249 (CVNKTRIRWT…HLQKYRIAKY (61 aa)) constitute an HTH myb-type domain. A DNA-binding region (H-T-H motif) is located at residues 220–245 (PKAILKRMDSDGLTIFHVKSHLQKYR). Residues 279-299 (KEALQLQLDVQRHLHEQLEIQ) adopt a coiled-coil conformation. The LHEQLE signature appears at 292–297 (LHEQLE).

The protein belongs to the MYB-CC family.

The protein localises to the nucleus. The sequence is that of Myb family transcription factor PHL5 from Arabidopsis thaliana (Mouse-ear cress).